Here is a 201-residue protein sequence, read N- to C-terminus: Large ribosomal subunit protein bL25 (201 aa).

The protein belongs to the bacterial ribosomal protein bL25 family. CTC subfamily. Part of the 50S ribosomal subunit; part of the 5S rRNA/L5/L18/L25 subcomplex. Contacts the 5S rRNA. Binds to the 5S rRNA independently of L5 and L18.

In terms of biological role, this is one of the proteins that binds to the 5S RNA in the ribosome where it forms part of the central protuberance. In Burkholderia cenocepacia (strain HI2424), this protein is Large ribosomal subunit protein bL25.